The chain runs to 616 residues: Angiotensin-converting enzyme (616 aa).

Positions 1–23 are cleaved as a signal peptide; it reads MNLINFSYLNLLFGAGLFSVLES. Positions 27–610 constitute a Peptidase M2 domain; that stretch reads LNTESDAKKW…PRAENWMGGK (584 aa). 2 N-linked (GlcNAc...) asparagine glycosylation sites follow: N61 and N96. A disulfide bond links C142 and C152. Chloride-binding residues include R180 and Y218. The N-linked (GlcNAc...) asparagine glycan is linked to N303. C345 and C363 form a disulfide bridge. Zn(2+) is bound at residue H376. E377 acts as the Proton acceptor in catalysis. 2 residues coordinate Zn(2+): H380 and E404. N428 carries an N-linked (GlcNAc...) asparagine glycan. W478 and R482 together coordinate chloride. H506 acts as the Proton donor in catalysis. R515 contacts chloride. Residues C531 and C543 are joined by a disulfide bond. N535 and N573 each carry an N-linked (GlcNAc...) asparagine glycan.

The protein belongs to the peptidase M2 family. The cofactor is Zn(2+). Chloride is required as a cofactor. As to expression, epithelial cells of the midgut.

It localises to the secreted. The protein resides in the extracellular space. The enzyme catalyses Release of a C-terminal dipeptide, oligopeptide-|-Xaa-Yaa, when Xaa is not Pro, and Yaa is neither Asp nor Glu. Thus, conversion of angiotensin I to angiotensin II, with increase in vasoconstrictor activity, but no action on angiotensin II.. Its activity is regulated as follows. Activated by chloride. Inhibited by captopril and lisinopril, and to a lesser extent by delaprilat. This is Angiotensin-converting enzyme (ACE) from Theromyzon tessulatum (Duck leech).